The sequence spans 312 residues: Protein atonal (312 aa).

Disordered stretches follow at residues 136–174 and 220–248; these read SNVG…TAAA and NDGS…GKQI. Over residues 162 to 174 the composition is skewed to low complexity; that stretch reads PSTTATSTPTAAA. The region spanning 255–307 is the bHLH domain; it reads KRRLAANARERRRMQNLNQAFDRLRQYLPCLGNDRQLSKHETLQMAQTYISAL.

Efficient DNA binding requires dimerization with another bHLH protein. Forms a heterodimer with Daughterless. In terms of tissue distribution, proneural clusters and sense organ precursors of the chordotonal organs, optic furrow of the eye-antennal disk and developing brain lobe.

The protein localises to the nucleus. Its function is as follows. Developmental protein involved in neurogenesis. Required for the formation of chordotonal organs and photoreceptors. Seems to bind to E boxes. Specifically required for the photoreceptor R8 selection. This Drosophila melanogaster (Fruit fly) protein is Protein atonal (ato).